Reading from the N-terminus, the 218-residue chain is MSSINITNVTVLDNPAPFVNPFQFEISYECLTSLKDDLEWKLIYVGSAEDETYDQVLESVLVGPVNVGNYRFVLQADSPDPLKIREEDIIGVTVLLLTCSYMDQEFIRVGYYVNNDYDDEQLREEPPTKVLIDKVQRNILTDKPRVTKFPINFHPENEQTLGDGPAPTEPFADSVVNGEAPVFLEQPQKLQEIEQFDDSDVNGEAIALLDQPQNLQET.

The protein belongs to the ASF1 family. As to quaternary structure, interacts with histone H3 and histone H4. Interacts strongly with the N-terminus of TOUSLED. Phosphorylated in vitro by TOUSLED.

The protein resides in the nucleus. In terms of biological role, histone chaperone that facilitates histone deposition and histone exchange and removal during nucleosome assembly and disassembly. The sequence is that of Histone chaperone ASF1B (ASF1B) from Arabidopsis thaliana (Mouse-ear cress).